The following is a 91-amino-acid chain: Transcriptional repressor FrmR (91 aa).

Belongs to the FrmR/RcnR family. Homotetramer.

It localises to the cytoplasm. Its function is as follows. Formaldehyde sensor. In the absence of formaldehyde, mediates repression of the frmRAB operon. Acts by binding directly to the frmRAB promoter region. In the presence of formaldehyde, it dissociates from the frmRAB promoter region and allows expression of the formaldehyde detoxification system encoded by frmA and frmB. This Escherichia coli (strain UTI89 / UPEC) protein is Transcriptional repressor FrmR.